Reading from the N-terminus, the 179-residue chain is SCAN domain-containing protein 1 (179 aa).

The segment at 1–107 is disordered; the sequence is MAATEPILAT…AGSRLGPETF (107 aa). Low complexity predominate over residues 52–80; the sequence is SPNAAVPEAIPTPRAAASAALELPLGPAP. The SCAN box domain occupies 108–166; that stretch reads RQRFRQFRYQDAAGPREAFRQLRELSRQWLRPDIRTKEQIVEMLVQEQLLAILPEAARA.

As to quaternary structure, interacts with ZNF202.

Its subcellular location is the nucleus. May regulate transcriptional activity. This Pan paniscus (Pygmy chimpanzee) protein is SCAN domain-containing protein 1 (SCAND1).